The following is a 100-amino-acid chain: MGFTNLVSLAALIEKAFPIRYTPAGIPVLDIILKHESWQEENGQQCLVQLEIPARILGRQAEEWQYRQGDCATVEGFLAQKSRRSLMPMLRIQNIKEYKG.

The SSB domain occupies 4–99; it reads TNLVSLAALI…LRIQNIKEYK (96 aa).

Belongs to the PriB family. As to quaternary structure, homodimer. Component of the replication restart primosome. Primosome assembly occurs via a 'hand-off' mechanism. PriA binds to replication forks, subsequently PriB then DnaT bind; DnaT then displaces ssDNA to generate the helicase loading substrate. Interacts with PriA with high affinity, independent of DNA presence.

Its activity is regulated as follows. PriA:PriB complex-catalyzed duplex DNA winding is inhibited by CGS 15943 (CHEBI:131351); PriA is the drug target. Its function is as follows. Stimulates the DNA unwinding activity of PriA helicase, which does not seem to require single-stranded (ss)DNA-binding by PriB. Activates DNA-dependent ATP hydrolysis catalyzed by PriA. Weakly binds ssDNA. Weakly binds double-stranded (ds)DNA, a partial duplex DNA with a 3' ssDNA overhang, and a forked DNA structure with fully duplex leading and lagging strand arms in vitro. Involved in the restart of stalled replication forks, which reloads the replicative helicase on sites other than the origin of replication; the PriA-PriB pathway is the major replication restart pathway. During primosome assembly it facilitates complex formation between PriA and DnaT on DNA; stabilizes PriA on DNA. Stimulates the DNA unwinding activity of PriA helicase. In Neisseria gonorrhoeae (strain ATCC 700825 / FA 1090), this protein is Replication restart protein PriB.